The chain runs to 350 residues: S-adenosylmethionine:tRNA ribosyltransferase-isomerase (350 aa).

Belongs to the QueA family. As to quaternary structure, monomer.

The protein localises to the cytoplasm. The catalysed reaction is 7-aminomethyl-7-carbaguanosine(34) in tRNA + S-adenosyl-L-methionine = epoxyqueuosine(34) in tRNA + adenine + L-methionine + 2 H(+). Its pathway is tRNA modification; tRNA-queuosine biosynthesis. Functionally, transfers and isomerizes the ribose moiety from AdoMet to the 7-aminomethyl group of 7-deazaguanine (preQ1-tRNA) to give epoxyqueuosine (oQ-tRNA). The protein is S-adenosylmethionine:tRNA ribosyltransferase-isomerase of Aliivibrio salmonicida (strain LFI1238) (Vibrio salmonicida (strain LFI1238)).